Consider the following 158-residue polypeptide: Non-secretory ribonuclease (158 aa).

Residues 1-27 (MVPKLFTSQICVLLLFGLLSVEVSLQV) form the signal peptide. A C-linked (Man) tryptophan glycan is attached at W34. H42 (proton acceptor) is an active-site residue. Intrachain disulfides connect C50–C110, C64–C121, C82–C136, and C89–C98. Y60 is modified (3'-nitrotyrosine). 65–69 (KNQNT) is a binding site for substrate. 3 N-linked (GlcNAc...) asparagine glycosylation sites follow: N86, N92, and N111. Residue H153 is the Proton donor of the active site.

The protein belongs to the pancreatic ribonuclease family. In terms of assembly, interacts with and forms a tight 1:1 complex with RNH1. Dimerization of two such complexes may occur.

The protein resides in the lysosome. It is found in the cytoplasmic granule. The catalysed reaction is an [RNA] containing cytidine + H2O = an [RNA]-3'-cytidine-3'-phosphate + a 5'-hydroxy-ribonucleotide-3'-[RNA].. It catalyses the reaction an [RNA] containing uridine + H2O = an [RNA]-3'-uridine-3'-phosphate + a 5'-hydroxy-ribonucleotide-3'-[RNA].. Functionally, this is a non-secretory ribonuclease. It is a pyrimidine specific nuclease with a slight preference for U. Cytotoxin and helminthotoxin. Possesses a wide variety of biological activities. This is Non-secretory ribonuclease (RNASE2) from Saguinus oedipus (Cotton-top tamarin).